The sequence spans 536 residues: Arginine--tRNA ligase (536 aa).

Residues 119 to 129 carry the 'HIGH' region motif; that stretch reads ANPTGFLHIGH.

The protein belongs to the class-I aminoacyl-tRNA synthetase family. Monomer.

The protein resides in the cytoplasm. It carries out the reaction tRNA(Arg) + L-arginine + ATP = L-arginyl-tRNA(Arg) + AMP + diphosphate. The chain is Arginine--tRNA ligase from Mycoplasma mobile (strain ATCC 43663 / 163K / NCTC 11711) (Mesomycoplasma mobile).